The primary structure comprises 224 residues: ATP-dependent dethiobiotin synthetase BioD (224 aa).

Position 13-18 (13-18 (NVGKTI)) interacts with ATP. Position 17 (T17) interacts with Mg(2+). K38 is a catalytic residue. S42 contributes to the substrate binding site. ATP contacts are provided by residues D55, 116 to 119 (EGAG), 176 to 177 (NN), and N211. Mg(2+) contacts are provided by D55 and E116.

Belongs to the dethiobiotin synthetase family. In terms of assembly, homodimer. Mg(2+) is required as a cofactor.

Its subcellular location is the cytoplasm. It carries out the reaction (7R,8S)-7,8-diammoniononanoate + CO2 + ATP = (4R,5S)-dethiobiotin + ADP + phosphate + 3 H(+). It functions in the pathway cofactor biosynthesis; biotin biosynthesis; biotin from 7,8-diaminononanoate: step 1/2. Functionally, catalyzes a mechanistically unusual reaction, the ATP-dependent insertion of CO2 between the N7 and N8 nitrogen atoms of 7,8-diaminopelargonic acid (DAPA, also called 7,8-diammoniononanoate) to form a ureido ring. This Buchnera aphidicola subsp. Acyrthosiphon pisum (strain 5A) protein is ATP-dependent dethiobiotin synthetase BioD.